The following is a 319-amino-acid chain: Triacylglycerol lipase (319 aa).

The 279-residue stretch at 10-288 (PVILVHGLAG…TSYHWNHLDE (279 aa)) folds into the AB hydrolase-1 domain. Position 17 (L17) interacts with substrate. S87 acts as the Nucleophile in catalysis. A substrate-binding site is contributed by Q88. C190 and C269 are joined by a disulfide. Residue D241 participates in Ca(2+) binding. Residues D263 and H285 each act as charge relay system in the active site. The Ca(2+) site is built by D287, Q291, and V295.

It belongs to the AB hydrolase superfamily. Pseudomonas lipase family. Monomer. Interacts with lipase-specific foldase Lif. It depends on Ca(2+) as a cofactor.

The protein resides in the secreted. The enzyme catalyses a triacylglycerol + H2O = a diacylglycerol + a fatty acid + H(+). Catalyzes the hydrolysis of triacylglycerol. The sequence is that of Triacylglycerol lipase from Pseudarthrobacter phenanthrenivorans (Arthrobacter phenanthrenivorans).